The primary structure comprises 225 residues: Enolase-phosphatase E1 (225 aa).

The protein belongs to the HAD-like hydrolase superfamily. MasA/MtnC family. As to quaternary structure, monomer. Mg(2+) serves as cofactor.

The enzyme catalyses 5-methylsulfanyl-2,3-dioxopentyl phosphate + H2O = 1,2-dihydroxy-5-(methylsulfanyl)pent-1-en-3-one + phosphate. It functions in the pathway amino-acid biosynthesis; L-methionine biosynthesis via salvage pathway; L-methionine from S-methyl-5-thio-alpha-D-ribose 1-phosphate: step 3/6. The protein operates within amino-acid biosynthesis; L-methionine biosynthesis via salvage pathway; L-methionine from S-methyl-5-thio-alpha-D-ribose 1-phosphate: step 4/6. Its function is as follows. Bifunctional enzyme that catalyzes the enolization of 2,3-diketo-5-methylthiopentyl-1-phosphate (DK-MTP-1-P) into the intermediate 2-hydroxy-3-keto-5-methylthiopentenyl-1-phosphate (HK-MTPenyl-1-P), which is then dephosphorylated to form the acireductone 1,2-dihydroxy-3-keto-5-methylthiopentene (DHK-MTPene). The sequence is that of Enolase-phosphatase E1 from Pseudomonas aeruginosa (strain LESB58).